Here is a 298-residue protein sequence, read N- to C-terminus: tRNA pseudouridine synthase B (298 aa).

Catalysis depends on aspartate 44, which acts as the Nucleophile.

It belongs to the pseudouridine synthase TruB family. Type 1 subfamily.

It carries out the reaction uridine(55) in tRNA = pseudouridine(55) in tRNA. Functionally, responsible for synthesis of pseudouridine from uracil-55 in the psi GC loop of transfer RNAs. The chain is tRNA pseudouridine synthase B from Mycobacteroides abscessus (strain ATCC 19977 / DSM 44196 / CCUG 20993 / CIP 104536 / JCM 13569 / NCTC 13031 / TMC 1543 / L948) (Mycobacterium abscessus).